Here is a 388-residue protein sequence, read N- to C-terminus: Cuticle-degrading protease (388 aa).

The N-terminal stretch at 1–18 is a signal peptide; it reads MHLSALLTLLPAVLAAPA. A propeptide spanning residues 19-107 is cleaved from the precursor; that stretch reads TIGRRAEPAP…IEKDAVMRIS (89 aa). In terms of domain architecture, Inhibitor I9 spans 41–106; sequence KYIVKFKDDI…FIEKDAVMRI (66 aa). The Peptidase S8 domain maps to 116 to 388; sequence PWGLGRISHR…TVNYLAYNGA (273 aa). 2 cysteine pairs are disulfide-bonded: cysteine 143–cysteine 233 and cysteine 288–cysteine 360. Active-site charge relay system residues include aspartate 148 and histidine 179. Asparagine 296 is a glycosylation site (N-linked (GlcNAc...) asparagine). The active-site Charge relay system is the serine 334.

The protein belongs to the peptidase S8 family.

Its subcellular location is the secreted. In terms of biological role, capable of breaching the insect cuticle. The polypeptide is Cuticle-degrading protease (PR1) (Metarhizium anisopliae (Entomophthora anisopliae)).